The following is a 1225-amino-acid chain: DNA-directed RNA polymerase subunit beta' (1225 aa).

Positions 60, 62, 75, and 78 each coordinate Zn(2+). 3 residues coordinate Mg(2+): D450, D452, and D454. Zn(2+) is bound by residues C818, C892, C899, and C902.

The protein belongs to the RNA polymerase beta' chain family. As to quaternary structure, the RNAP catalytic core consists of 2 alpha, 1 beta, 1 beta' and 1 omega subunit. When a sigma factor is associated with the core the holoenzyme is formed, which can initiate transcription. The cofactor is Mg(2+). Zn(2+) is required as a cofactor.

The catalysed reaction is RNA(n) + a ribonucleoside 5'-triphosphate = RNA(n+1) + diphosphate. Its function is as follows. DNA-dependent RNA polymerase catalyzes the transcription of DNA into RNA using the four ribonucleoside triphosphates as substrates. The sequence is that of DNA-directed RNA polymerase subunit beta' from Streptococcus pneumoniae (strain ATCC 700669 / Spain 23F-1).